Here is a 246-residue protein sequence, read N- to C-terminus: Acetoacetate decarboxylase (246 aa).

The Schiff-base intermediate with acetoacetate role is filled by Lys116.

It belongs to the ADC family.

The catalysed reaction is acetoacetate + H(+) = acetone + CO2. Its function is as follows. Catalyzes the conversion of acetoacetate to acetone and carbon dioxide. This chain is Acetoacetate decarboxylase, found in Bordetella avium (strain 197N).